Consider the following 540-residue polypeptide: MDGLQSLGDVTAEIFGLPLEGHSVQESKPLKTEDEPQGAPLKPLVFRVDESTPGLVQSVLLERGWDKFDEQRQDVEDWNLYWRSSSFRRAEYVNVKPWQRLNHHPGMTNLTRKDCLAKHLARMRSRYGESLYEFTPLTFIMPTDYTKFVAKYFKEKQDLGTKPSYWICKPAELSRGRGIIIFSDIRDLMFKGTYVVQKYICNPLLVGRYKCDLRIYVCITGFKPLTIYMYQEGLVRFATEKFDLRNLEDYYSHLTNSSINKLGASYQKIKEVVGQGCKWTLSRFFSYLRNWDVDDLLLRQKISHMVILTVLAMAPSVPVTYNCFELFGFDILIDDNLKPWLLEVNYNPALTLDCSTDESVKRSLVHDVIELLYLNGLRSEEKKCGRTSPGNSVVSLARSHHHEFCATPNSSSYASLIEFTTGSKSDPAVQNICPKHTRTSQLREMMSRRDRLLTKEAAKSKPRHKAWHLPRKMVFPYASQSQPHKMKGPAGDLPEAGSTPNDHAGNFVLIFPFNKATFRASRNGLNVKRIIQELQKLMNK.

The TTL domain occupies 41 to 384 (LKPLVFRVDE…NGLRSEEKKC (344 aa)). ATP contacts are provided by residues lysine 169, 175–176 (RG), 197–200 (QKYI), and 210–212 (KCD). Residue arginine 175 participates in a protein binding. An L-glutamate-binding site is contributed by arginine 236. An ATP-binding site is contributed by 255–256 (TN). Residues serine 258 and lysine 278 each coordinate L-glutamate. The Mg(2+) site is built by aspartate 330, glutamate 343, and asparagine 345. Lysine 361 serves as a coordination point for L-glutamate. The tract at residues 479-499 (SQSQPHKMKGPAGDLPEAGST) is disordered.

It belongs to the tubulin--tyrosine ligase family. It depends on Mg(2+) as a cofactor. Highly expressed in brain, kidney, liver and testis. Expressed in heart, lung, muscle and spleen.

Probable tubulin polyglutamylase that generates side chains of glutamate on the gamma-carboxyl group of specific glutamate residues within the C-terminal tail of target proteins. Similar to TTLL1, may acquire enzymatic activity only in complex with other proteins as it is most likely lacking domains important for autonomous activity. Probably involved in the side-chain initiation step of the polyglutamylation reaction rather than the elongation step. The chain is Probable tubulin polyglutamylase TTLL2 from Mus musculus (Mouse).